Here is a 184-residue protein sequence, read N- to C-terminus: Cobalamin adenosyltransferase (184 aa).

A disordered region spans residues 1-21 (MGNRLSKIATRTGDAGTTGLG). ATP is bound by residues 10 to 13 (TRTG), 18 to 19 (TG), lysine 28, 130 to 134 (RRAER), and asparagine 154.

This sequence belongs to the Cob(I)alamin adenosyltransferase family. As to quaternary structure, homotrimer.

It catalyses the reaction 2 cob(II)alamin + AH2 + 2 ATP = 2 adenosylcob(III)alamin + 2 triphosphate + A + 2 H(+). Is potentially allosterically regulated by GTP/GDP, which enhances its affinity for AdoCbl by 5-fold. Binds cob(II)alamin weakly in the absence of ATP. The presence of ATP (but not GTP or GDP) increases the affinity of cob(II)alamin for the enzyme, and stoichiometric binding is observed. GTP blocks the transfer of cob(II)alamin to IcmF from ATR, thus averting its reconstitution with inactive cofactor. Functionally, adenosyltransferase that catalyzes the conversion of cob(II)alamin to adenosylcob(III)alamin (AdoCbl) in the presence of ATP and an electron donor. Acts as an accessory protein of IcmF that functions in cofactor repair, since IcmF is prone to inactivation during catalytic turnover due to the occasional loss of the 5'-deoxyadenosine moiety and formation of the inactive cob(II)alamin cofactor in its active site. Thus, receives and repairs the inactive cofactor, which is then reloaded onto IcmF in a GTPase-gated step. This chain is Cobalamin adenosyltransferase, found in Cupriavidus metallidurans (strain ATCC 43123 / DSM 2839 / NBRC 102507 / CH34) (Ralstonia metallidurans).